The following is a 433-amino-acid chain: Steroid hormone receptor ERR2 (433 aa).

A disordered region spans residues 1 to 38; the sequence is MSSDDRHLGSSCGSFIKTEPSSPSSGIDALSHHSPSGS. Residues 28-38 show a composition bias toward low complexity; the sequence is DALSHHSPSGS. The interaction with NANOG stretch occupies residues 93–211; it reads YMLNAIPKRL…SPPAKKPLTK (119 aa). Positions 100-186 form a DNA-binding region, nuclear receptor; that stretch reads KRLCLVCGDI…RVRGGRQKYK (87 aa). 2 NR C4-type zinc fingers span residues 103–123 and 139–163; these read CLVC…CEAC and CPAT…FMKC. Residues 203–433 form an essential for ESRRB transcriptional activity and interaction with NCOA3 region; sequence PPAKKPLTKI…LFLEMLEAKV (231 aa). The NR LBD domain occupies 208 to 432; sequence PLTKIVSYLL…KLFLEMLEAK (225 aa).

The protein belongs to the nuclear hormone receptor family. NR3 subfamily. Binds DNA as a monomer. Interacts with NR0B1; represses ESRRB activity at the GATA6 promoter. Interacts with NANOG; reciprocally modulates their transcriptional activities and activates POU5F1 expression. Interacts with NCOA3; mediates the interaction between ESRRB and RNA polymerase II complexes and allows NCOA3 corecruitment to ESRRB, KLF4, NANOG, and SOX2 enhancer regions to trigger ESRRB-dependent gene activation involved in self-renewal and pluripotency. Interacts with KDM1A; co-occupes the core set of ESRRB targets including ELF5 and EOMES. Interacts with the multiprotein complex Integrator, at least composed of INTS1, INTS2, INTS3, INTS4, INTS5, INTS6, INTS7, INTS8, INTS9/RC74, INTS10, INTS11/CPSF3L and INTS12; ESRRB is probably not a core component of the integrator complex and associates to integrator via its interaction with INTS1 and INTS9; attracts the transcriptional machinery. Interacts with JARID2. Interacts with POU5F1; recruits ESRRB near the POU5F1-SOX2 element in the NANOG proximal promoter leading to activation of NANOG expression; the interaction is DNA independent. Interacts with NFE2L2; represses NFE2L2 transcriptional activity. Isoform 1 interacts with ESR1. Post-translationally, acetylated by PCAF/KAT2 (in vitro).

The protein localises to the nucleus. It is found in the cytoplasm. Its subcellular location is the chromosome. Transcription factor that binds a canonical ESRRB recognition (ERRE) sequence 5'TCAAGGTCA-3' localized on promoter and enhancer of targets genes regulating their expression or their transcription activity. Plays a role, in a LIF-independent manner, in maintainance of self-renewal and pluripotency of embryonic and trophoblast stem cells through different signaling pathways including FGF signaling pathway and Wnt signaling pathways. Involved in morula development (2-16 cells embryos) by acting as a regulator at the 8-cell stage. Upon FGF signaling pathway activation, interacts with KDM1A by directly binding to enhancer site of ELF5 and EOMES and activating their transcription leading to self-renewal of trophoblast stem cells. Also regulates expression of multiple rod-specific genes and is required for survival of this cell type. Plays a role as transcription factor activator of GATA6, NR0B1, POU5F1 and PERM1. Plays a role as transcription factor repressor of NFE2L2 transcriptional activity and ESR1 transcriptional activity. During mitosis remains bound to a subset of interphase target genes, including pluripotency regulators, through the canonical ESRRB recognition (ERRE) sequence, leading to their transcriptional activation in early G1 phase. Can coassemble on structured DNA elements with other transcription factors like SOX2, POU5F1, KDM1A and NCOA3 to trigger ESRRB-dependent gene activation. This mechanism, in the case of SOX2 corecruitment prevents the embryonic stem cells (ESCs) to epiblast stem cells (EpiSC) transition through positive regulation of NR0B1 that inhibits the EpiSC transcriptional program. Also plays a role inner ear development by controlling expression of ion channels and transporters and in early placentation. Functionally, transcription factor that binds a canonical ESRRB recognition (ERRE) sequence 5'TCAAGGTCA-3' localized on promoter and enhancer of targets genes regulating their expression or their transcription activity. Positively regulates ESR1 transcriptional activity upon E2 stimulation. The polypeptide is Steroid hormone receptor ERR2 (Homo sapiens (Human)).